The chain runs to 446 residues: N-succinylarginine dihydrolase (446 aa).

Residues 19–28 (AGLSFGNVAS), Asn-110, and 137–138 (HR) contribute to the substrate site. The active site involves Glu-174. Arg-213 provides a ligand contact to substrate. The active site involves His-249. Positions 251 and 364 each coordinate substrate. Catalysis depends on Cys-370, which acts as the Nucleophile.

Belongs to the succinylarginine dihydrolase family. Homodimer.

It carries out the reaction N(2)-succinyl-L-arginine + 2 H2O + 2 H(+) = N(2)-succinyl-L-ornithine + 2 NH4(+) + CO2. It participates in amino-acid degradation; L-arginine degradation via AST pathway; L-glutamate and succinate from L-arginine: step 2/5. Functionally, catalyzes the hydrolysis of N(2)-succinylarginine into N(2)-succinylornithine, ammonia and CO(2). This chain is N-succinylarginine dihydrolase, found in Burkholderia multivorans (strain ATCC 17616 / 249).